Consider the following 549-residue polypeptide: Manganese transporter SMF2 (549 aa).

A disordered region spans residues M1–N23. Residues S12–V22 show a composition bias toward polar residues. The next 8 helical transmembrane spans lie at L91–C109, F130–T147, I161–Y185, I196–V214, L312–G332, I350–F372, A432–T452, and V521–F541.

This sequence belongs to the NRAMP family.

It localises to the vacuole lumen. Its subcellular location is the vesicle. The protein resides in the cell membrane. It catalyses the reaction Mn(2+)(in) = Mn(2+)(out). High-affinity manganese transporter involved in manganese uptake from the extracellular environment. The chain is Manganese transporter SMF2 (SMF2) from Saccharomyces cerevisiae (strain ATCC 204508 / S288c) (Baker's yeast).